Consider the following 178-residue polypeptide: Co-chaperone protein p23-1 (178 aa).

The region spanning 2 to 91 is the CS domain; it reads SRHPTVKWAQ…AESKWWNRLT (90 aa). 2 stretches are compositionally biased toward acidic residues: residues 112 to 126 and 136 to 155; these read DDED…DFGD and DTDE…EGET. Residues 112–178 form a disordered region; the sequence is DDEDKGGEGD…DEEGVNAKKD (67 aa). Basic and acidic residues predominate over residues 157-178; the sequence is AETKEKKIDGEKDEEGVNAKKD.

Belongs to the p23/wos2 family. As to quaternary structure, interacts with HSP90 in an ATP-dependent manner.

Acts as a co-chaperone for HSP90. This is Co-chaperone protein p23-1 from Brassica napus (Rape).